A 630-amino-acid chain; its full sequence is Putative F-box/LRR-repeat protein At3g49150 (630 aa).

Positions 15-63 constitute an F-box domain; sequence KDIISDLPEALICHILSFLPIEDSALTSVLSKKWQHLFAFRPNLEFDDA. LRR repeat units lie at residues 101–129, 152–178, 180–205, 228–253, 300–325, 337–362, 406–436, 437–465, and 567–590; these read CRDF…DLRC, RIET…YLNK, LLRH…FIMN, CEDV…VYHD, ISNV…QIPV, DQKA…IFDG, CDDY…KLFY, DTQI…FNAR, and DSSI…GLNW.

The polypeptide is Putative F-box/LRR-repeat protein At3g49150 (Arabidopsis thaliana (Mouse-ear cress)).